Consider the following 130-residue polypeptide: Small ribosomal subunit protein uS8 (130 aa).

The protein belongs to the universal ribosomal protein uS8 family. In terms of assembly, part of the 30S ribosomal subunit. Contacts proteins S5 and S12.

One of the primary rRNA binding proteins, it binds directly to 16S rRNA central domain where it helps coordinate assembly of the platform of the 30S subunit. The polypeptide is Small ribosomal subunit protein uS8 (Shewanella denitrificans (strain OS217 / ATCC BAA-1090 / DSM 15013)).